We begin with the raw amino-acid sequence, 59 residues long: Large ribosomal subunit protein bL32 (59 aa).

Residues 1-20 (MAVPKKKTSKGKRNQRHATW) show a composition bias toward basic residues. The disordered stretch occupies residues 1–22 (MAVPKKKTSKGKRNQRHATWKG).

The protein belongs to the bacterial ribosomal protein bL32 family.

The chain is Large ribosomal subunit protein bL32 from Prochlorococcus marinus (strain NATL1A).